The following is a 373-amino-acid chain: 3 beta-hydroxysteroid dehydrogenase/Delta 5--&gt;4-isomerase (373 aa).

Tyrosine 155 acts as the Proton acceptor in catalysis. An NAD(+)-binding site is contributed by lysine 159. A helical membrane pass occupies residues 288 to 308; sequence IFLKYWLAFLLEIVSFLLSPI.

This sequence belongs to the 3-beta-HSD family.

It is found in the endoplasmic reticulum membrane. The protein localises to the mitochondrion membrane. The enzyme catalyses a 3beta-hydroxy-Delta(5)-steroid + NAD(+) = a 3-oxo-Delta(5)-steroid + NADH + H(+). The catalysed reaction is a 3-oxo-Delta(5)-steroid = a 3-oxo-Delta(4)-steroid. It functions in the pathway lipid metabolism; steroid biosynthesis. 3-beta-HSD is a bifunctional enzyme, that catalyzes the oxidative conversion of Delta(5)-ene-3-beta-hydroxy steroid, and the oxidative conversion of ketosteroids. The 3-beta-HSD enzymatic system plays a crucial role in the biosynthesis of all classes of hormonal steroids. This chain is 3 beta-hydroxysteroid dehydrogenase/Delta 5--&gt;4-isomerase (HSD3B), found in Equus caballus (Horse).